The sequence spans 232 residues: Probable transcriptional regulatory protein Bd1964 (232 aa).

This sequence belongs to the TACO1 family.

The protein localises to the cytoplasm. The protein is Probable transcriptional regulatory protein Bd1964 of Bdellovibrio bacteriovorus (strain ATCC 15356 / DSM 50701 / NCIMB 9529 / HD100).